Consider the following 117-residue polypeptide: Large ribosomal subunit protein bL20 (117 aa).

The protein belongs to the bacterial ribosomal protein bL20 family.

Its function is as follows. Binds directly to 23S ribosomal RNA and is necessary for the in vitro assembly process of the 50S ribosomal subunit. It is not involved in the protein synthesizing functions of that subunit. In Rickettsia felis (strain ATCC VR-1525 / URRWXCal2) (Rickettsia azadi), this protein is Large ribosomal subunit protein bL20.